A 101-amino-acid chain; its full sequence is Urease subunit beta (101 aa).

It belongs to the urease beta subunit family. In terms of assembly, heterotrimer of UreA (gamma), UreB (beta) and UreC (alpha) subunits. Three heterotrimers associate to form the active enzyme.

It is found in the cytoplasm. It catalyses the reaction urea + 2 H2O + H(+) = hydrogencarbonate + 2 NH4(+). Its pathway is nitrogen metabolism; urea degradation; CO(2) and NH(3) from urea (urease route): step 1/1. This is Urease subunit beta from Saccharophagus degradans (strain 2-40 / ATCC 43961 / DSM 17024).